Consider the following 307-residue polypeptide: UDP-3-O-acyl-N-acetylglucosamine deacetylase (307 aa).

Zn(2+) is bound by residues histidine 78, histidine 241, and aspartate 245. Catalysis depends on histidine 268, which acts as the Proton donor.

This sequence belongs to the LpxC family. The cofactor is Zn(2+).

It carries out the reaction a UDP-3-O-[(3R)-3-hydroxyacyl]-N-acetyl-alpha-D-glucosamine + H2O = a UDP-3-O-[(3R)-3-hydroxyacyl]-alpha-D-glucosamine + acetate. It functions in the pathway glycolipid biosynthesis; lipid IV(A) biosynthesis; lipid IV(A) from (3R)-3-hydroxytetradecanoyl-[acyl-carrier-protein] and UDP-N-acetyl-alpha-D-glucosamine: step 2/6. Functionally, catalyzes the hydrolysis of UDP-3-O-myristoyl-N-acetylglucosamine to form UDP-3-O-myristoylglucosamine and acetate, the committed step in lipid A biosynthesis. The protein is UDP-3-O-acyl-N-acetylglucosamine deacetylase of Verminephrobacter eiseniae (strain EF01-2).